The primary structure comprises 108 residues: Class I hydrophobin 3 (108 aa).

The first 17 residues, 1–17, serve as a signal peptide directing secretion; that stretch reads MFFQTTIVAALAFLAVA. 4 disulfides stabilise this stretch: cysteine 28/cysteine 87, cysteine 35/cysteine 81, cysteine 36/cysteine 69, and cysteine 88/cysteine 101. An N-linked (GlcNAc...) asparagine glycan is attached at asparagine 37.

Belongs to the fungal hydrophobin family. In terms of assembly, self-assembles to form functional amyloid fibrils called rodlets. Self-assembly into fibrillar rodlets occurs spontaneously at hydrophobic:hydrophilic interfaces and the rodlets further associate laterally to form amphipathic monolayers.

It localises to the secreted. It is found in the cell wall. In terms of biological role, aerial growth, conidiation, and dispersal of filamentous fungi in the environment rely upon a capability of their secreting small amphipathic proteins called hydrophobins (HPBs) with low sequence identity. Class I can self-assemble into an outermost layer of rodlet bundles on aerial cell surfaces, conferring cellular hydrophobicity that supports fungal growth, development and dispersal; whereas Class II form highly ordered films at water-air interfaces through intermolecular interactions but contribute nothing to the rodlet structure. Vmh3 is a class I hydrophobin that is essential for the maintenance of the surface hydrophobicity of the mycelium and might be involved in the development of fruiting bodies. Plays an important role in hyphal resistance against environmental stress. Necessary for the efficient biodegradation of lignin. The polypeptide is Class I hydrophobin 3 (Pleurotus ostreatus (Oyster mushroom)).